We begin with the raw amino-acid sequence, 242 residues long: Uridylate kinase (242 aa).

11–14 (KLSG) provides a ligand contact to ATP. The segment at 19–24 (GNMGYG) is involved in allosteric activation by GTP. Glycine 53 serves as a coordination point for UMP. Glycine 54 and arginine 58 together coordinate ATP. UMP is bound by residues aspartate 73 and 134-141 (SGNPFFTT). The ATP site is built by threonine 161, tyrosine 167, and aspartate 170.

This sequence belongs to the UMP kinase family. Homohexamer.

Its subcellular location is the cytoplasm. The enzyme catalyses UMP + ATP = UDP + ADP. It functions in the pathway pyrimidine metabolism; CTP biosynthesis via de novo pathway; UDP from UMP (UMPK route): step 1/1. Its activity is regulated as follows. Allosterically activated by GTP. Inhibited by UTP. Functionally, catalyzes the reversible phosphorylation of UMP to UDP. This chain is Uridylate kinase, found in Nostoc sp. (strain PCC 7120 / SAG 25.82 / UTEX 2576).